The following is a 314-amino-acid chain: Methionyl-tRNA formyltransferase (314 aa).

112-115 (SLLP) is a binding site for (6S)-5,6,7,8-tetrahydrofolate.

This sequence belongs to the Fmt family.

It catalyses the reaction L-methionyl-tRNA(fMet) + (6R)-10-formyltetrahydrofolate = N-formyl-L-methionyl-tRNA(fMet) + (6S)-5,6,7,8-tetrahydrofolate + H(+). In terms of biological role, attaches a formyl group to the free amino group of methionyl-tRNA(fMet). The formyl group appears to play a dual role in the initiator identity of N-formylmethionyl-tRNA by promoting its recognition by IF2 and preventing the misappropriation of this tRNA by the elongation apparatus. The polypeptide is Methionyl-tRNA formyltransferase (Aeromonas salmonicida (strain A449)).